Consider the following 432-residue polypeptide: Trigger factor (432 aa).

One can recognise a PPIase FKBP-type domain in the interval 161 to 246 (EDRVTIDFTG…LKKVEERELP (86 aa)).

The protein belongs to the FKBP-type PPIase family. Tig subfamily.

It localises to the cytoplasm. It catalyses the reaction [protein]-peptidylproline (omega=180) = [protein]-peptidylproline (omega=0). Involved in protein export. Acts as a chaperone by maintaining the newly synthesized protein in an open conformation. Functions as a peptidyl-prolyl cis-trans isomerase. This Klebsiella pneumoniae subsp. pneumoniae (strain ATCC 700721 / MGH 78578) protein is Trigger factor.